Consider the following 994-residue polypeptide: Valine--tRNA ligase (994 aa).

Positions 43–53 (PNVTGTLHMGH) match the 'HIGH' region motif. Residues 332-356 (IASGATSDTTDTPSDSDASNASNQH) form a disordered region. A compositionally biased stretch (low complexity) spans 333-353 (ASGATSDTTDTPSDSDASNAS). Residues 585 to 589 (KMSKS) carry the 'KMSKS' region motif. Lysine 588 serves as a coordination point for ATP. Residues 691–713 (TAHSPAQHQAGQDGQDVPRTPQP) are disordered. Residues 928–994 (LIDVDAERAR…NGLRERRTTL (67 aa)) are a coiled coil.

This sequence belongs to the class-I aminoacyl-tRNA synthetase family. ValS type 1 subfamily. Monomer.

Its subcellular location is the cytoplasm. The enzyme catalyses tRNA(Val) + L-valine + ATP = L-valyl-tRNA(Val) + AMP + diphosphate. Catalyzes the attachment of valine to tRNA(Val). As ValRS can inadvertently accommodate and process structurally similar amino acids such as threonine, to avoid such errors, it has a 'posttransfer' editing activity that hydrolyzes mischarged Thr-tRNA(Val) in a tRNA-dependent manner. The protein is Valine--tRNA ligase of Xylella fastidiosa (strain M23).